The following is a 476-amino-acid chain: MTSSPVPPTNSSDSSDSKVWSQRFESALNPVIAAFNASIHFDIALIEYDLTGSQAHVQMLAHSGIISQAEADAIDQGLEAIRQEYRQGQFQPGIEAEDIHFAVENRLIELIGDTGKKLHTGRSRNDQVGTDLRLYLHDQILQVQTLIRNWQQALVILASDHVQTLIPGYTHLQRAQPISLAHHLLAYFEMAERDWQRLREIDRRVNVSPLGLGALAGTPFPIDRQYTADKLGFADLYRNSLDGVSDRDFAIEFLCAASLIMVHLSRFSEEVILWASEEFGFIKLKDSCATGSSIMPQKKNPDVPELVRGKSGRVFGHLQSLLVVMKGLPLAYNKDLQEDKEAIFDGVTTIKACLEAMTILVAEGLEFQTPRLESAVGEDFSNATDVADYLSKQGVPFREAYNIVGAVVKTCLSQNKLLKDLTLEEWQQFHPQFADDIYSAISPRQVVAVRNSFGGTGFTQVQNALEQAKTLLSQSK.

The protein belongs to the lyase 1 family. Argininosuccinate lyase subfamily.

The protein localises to the cytoplasm. It catalyses the reaction 2-(N(omega)-L-arginino)succinate = fumarate + L-arginine. It functions in the pathway amino-acid biosynthesis; L-arginine biosynthesis; L-arginine from L-ornithine and carbamoyl phosphate: step 3/3. In Acaryochloris marina (strain MBIC 11017), this protein is Argininosuccinate lyase.